A 624-amino-acid chain; its full sequence is DNA-directed RNA polymerase subunit gamma (624 aa).

Zn(2+) contacts are provided by Cys-70, Cys-72, Cys-85, and Cys-88. The Mg(2+) site is built by Asp-466, Asp-468, and Asp-470.

Belongs to the RNA polymerase beta' chain family. RpoC1 subfamily. As to quaternary structure, in cyanobacteria the RNAP catalytic core is composed of 2 alpha, 1 beta, 1 beta', 1 gamma and 1 omega subunit. When a sigma factor is associated with the core the holoenzyme is formed, which can initiate transcription. Requires Mg(2+) as cofactor. Zn(2+) serves as cofactor.

The catalysed reaction is RNA(n) + a ribonucleoside 5'-triphosphate = RNA(n+1) + diphosphate. In terms of biological role, DNA-dependent RNA polymerase catalyzes the transcription of DNA into RNA using the four ribonucleoside triphosphates as substrates. The protein is DNA-directed RNA polymerase subunit gamma of Synechococcus elongatus (strain ATCC 33912 / PCC 7942 / FACHB-805) (Anacystis nidulans R2).